The sequence spans 476 residues: Cyclase-associated protein 1 (476 aa).

2 disordered regions span residues 224-262 (KPASAPAKGPPGAPAPPPAPLFSAESSKPSSSSNQKQGM) and 277-319 (GLRK…PPKM). A compositionally biased stretch (pro residues) spans 231-243 (KGPPGAPAPPPAP). Low complexity predominate over residues 246–256 (SAESSKPSSSS). Over residues 280 to 293 (KVTDDMKTKNRADR) the composition is skewed to basic and acidic residues. In terms of domain architecture, C-CAP/cofactor C-like spans 316–453 (PPKMELQMGR…PDGDWVEHAL (138 aa)).

It belongs to the CAP family. In terms of tissue distribution, expressed in roots, cotyledons, leaves, stems, flowers, pollen and shoots. Not detected in siliques.

In terms of biological role, actin monomer binding protein that accelerates the exchange of ADP for ATP. Regulates the pool of unpolymerized ATP-actin. Key intermediate between actin-depolymerizing factor (ADF)-mediated disassembly and the profilin-based nucleation and elongation machinery. The polypeptide is Cyclase-associated protein 1 (CAP1) (Arabidopsis thaliana (Mouse-ear cress)).